The primary structure comprises 339 residues: MSITVNQIVLHQLVKQAAEDGNVQLNTVLRNDLLQISAEVEQLMLELHQAYQGKAKGYGVFKEESLFARQLNRLLEQETDFLPFSYEAAKLLATELGKYTFAESGTLVLCQYNFLATDYLFIALLDSRISMLVDENLEIQRTQYLNINQFDIAARINLTDLRLNAQSNRYLTFIKGRVGRKVGDFFMDFLGADEGLNPQVQNQCLLQAVSDYCEQGELNKAQTQAVKKQVFDYCKGQINSGDEIALAELSEELPTLNERSFAAFAHERDYGLEESIPPLRSTLKSLTKFSGSGKGVTISFDAELINQRIIWDEAADSLTIHGLPANLRDQLRRNLTHEN.

This sequence belongs to the YejK family.

It localises to the cytoplasm. The protein localises to the nucleoid. The protein is Nucleoid-associated protein Asuc_0779 of Actinobacillus succinogenes (strain ATCC 55618 / DSM 22257 / CCUG 43843 / 130Z).